We begin with the raw amino-acid sequence, 532 residues long: ATP synthase subunit alpha (532 aa).

171–178 (GDRQTGKT) contacts ATP.

This sequence belongs to the ATPase alpha/beta chains family. As to quaternary structure, F-type ATPases have 2 components, CF(1) - the catalytic core - and CF(0) - the membrane proton channel. CF(1) has five subunits: alpha(3), beta(3), gamma(1), delta(1), epsilon(1). CF(0) has three main subunits: a(1), b(2) and c(9-12). The alpha and beta chains form an alternating ring which encloses part of the gamma chain. CF(1) is attached to CF(0) by a central stalk formed by the gamma and epsilon chains, while a peripheral stalk is formed by the delta and b chains.

The protein resides in the cell membrane. The enzyme catalyses ATP + H2O + 4 H(+)(in) = ADP + phosphate + 5 H(+)(out). In terms of biological role, produces ATP from ADP in the presence of a proton gradient across the membrane. The alpha chain is a regulatory subunit. This Amoebophilus asiaticus (strain 5a2) protein is ATP synthase subunit alpha.